A 399-amino-acid chain; its full sequence is Glutathione S-transferase LANCL1 (399 aa).

At Ala-2 the chain carries N-acetylalanine. At Lys-142 the chain carries N6-acetyllysine. A Zn(2+)-binding site is contributed by Cys-276. Position 317 (Lys-317) interacts with glutathione. 2 residues coordinate Zn(2+): Cys-322 and His-323. 364 to 367 serves as a coordination point for glutathione; the sequence is RTPD.

It belongs to the LanC-like protein family. As to quaternary structure, interacts with the C-terminal of STOM. Interacts with the EPS8 SH3 domain. Interaction with EPS8 is inhibited by glutathione binding. Expressed in brain.

Its subcellular location is the cytoplasm. It localises to the cell membrane. It catalyses the reaction RX + glutathione = an S-substituted glutathione + a halide anion + H(+). It carries out the reaction 1-chloro-2,4-dinitrobenzene + glutathione = 2,4-dinitrophenyl-S-glutathione + chloride + H(+). Functionally, functions as a glutathione transferase. Catalyzes conjugation of the glutathione (GSH) to artificial substrates 1-chloro-2,4-dinitrobenzene (CDNB) and p-nitrophenyl acetate. Mitigates neuronal oxidative stress during normal postnatal development and in response to oxidative stresses probably through GSH antioxidant defense mechanism. May play a role in EPS8 signaling. Binds glutathione. This Bos taurus (Bovine) protein is Glutathione S-transferase LANCL1 (LANCL1).